We begin with the raw amino-acid sequence, 500 residues long: Phenylalanine--tRNA ligase alpha subunit (500 aa).

Residues Thr343, 382–384, and Phe423 contribute to the L-phenylalanine site; that span reads QVD. Glu425 is a binding site for Mg(2+). Phe448 is a binding site for L-phenylalanine.

The protein belongs to the class-II aminoacyl-tRNA synthetase family. Phe-tRNA synthetase alpha subunit type 2 subfamily. As to quaternary structure, tetramer of two alpha and two beta subunits. Mg(2+) is required as a cofactor.

Its subcellular location is the cytoplasm. It carries out the reaction tRNA(Phe) + L-phenylalanine + ATP = L-phenylalanyl-tRNA(Phe) + AMP + diphosphate + H(+). The polypeptide is Phenylalanine--tRNA ligase alpha subunit (Thermococcus onnurineus (strain NA1)).